The primary structure comprises 364 residues: B3 domain-containing protein At5g38490 (364 aa).

The segment at 148–202 is disordered; sequence ASTSSSSLLNLPCLEPSTETKDVPNPNYQSSSPSSCLTGKTNRKRRAVEQRKSGK. The TF-B3 DNA-binding region spans 260 to 364; it reads FQKLIRNDFL…GVLCFALDTE (105 aa).

It is found in the nucleus. This Arabidopsis thaliana (Mouse-ear cress) protein is B3 domain-containing protein At5g38490.